Reading from the N-terminus, the 114-residue chain is UPF0102 protein jhp_0762 (114 aa).

The protein belongs to the UPF0102 family.

This chain is UPF0102 protein jhp_0762, found in Helicobacter pylori (strain J99 / ATCC 700824) (Campylobacter pylori J99).